The chain runs to 257 residues: MTYETILVERDQRVGIITLNRPQALNALNSQVMNEVTSAATELDDDPDIGAIIITGSAKAFAAGADIKEMADLTFADAFTADFFATWGKLAAVRTPTIAAVAGYALGGGCELAMMCDVLIAADTAKFGQPEIKLGVLPGMGGSQRLTRAIGKAKAMDLILTGRTMDAAEAERSGLVSRVVPADDLLTEARATATTISQMSASAARMAKEAVNRAFESSLSEGLLYERRLFHSAFATEDQSEGMAAFIEKRAPQFTHR.

It belongs to the enoyl-CoA hydratase/isomerase family.

The enzyme catalyses a (3S)-3-hydroxyacyl-CoA = a (2E)-enoyl-CoA + H2O. The catalysed reaction is a 4-saturated-(3S)-3-hydroxyacyl-CoA = a (3E)-enoyl-CoA + H2O. Could possibly oxidize fatty acids using specific components. The chain is Probable enoyl-CoA hydratase echA8 (echA8) from Mycobacterium tuberculosis (strain CDC 1551 / Oshkosh).